The chain runs to 330 residues: Beta-1,6-galactofuranosyltransferase WbbI (330 aa).

It is found in the cytoplasm. Its pathway is bacterial outer membrane biogenesis; lipopolysaccharide biosynthesis. In terms of biological role, involved in the transfer of galactofuranose (Galf) onto an alpha-D-gluco-configured acceptor substrate to form a beta-1,6-linkage. It uses n-octyl alpha-D-glucopyranoside as an acceptor substrate for the addition of galactofuranose from the donor substrate UDP-galactofuranose. It is not able to use beta-D-glucopyranoside isomers. This is Beta-1,6-galactofuranosyltransferase WbbI (wbbI) from Escherichia coli (strain K12).